The chain runs to 231 residues: 2,3-bisphosphoglycerate-dependent phosphoglycerate mutase (231 aa).

Substrate contacts are provided by residues 8–15, 21–22, Arg-60, 87–90, Lys-98, 114–115, and 183–184; these read RHGESEWN, TG, ERHY, RR, and GN. His-9 serves as the catalytic Tele-phosphohistidine intermediate. Residue Glu-87 is the Proton donor/acceptor of the active site.

The protein belongs to the phosphoglycerate mutase family. BPG-dependent PGAM subfamily.

The catalysed reaction is (2R)-2-phosphoglycerate = (2R)-3-phosphoglycerate. The protein operates within carbohydrate degradation; glycolysis; pyruvate from D-glyceraldehyde 3-phosphate: step 3/5. Its function is as follows. Catalyzes the interconversion of 2-phosphoglycerate and 3-phosphoglycerate. The protein is 2,3-bisphosphoglycerate-dependent phosphoglycerate mutase of Streptococcus equi subsp. zooepidemicus (strain H70).